We begin with the raw amino-acid sequence, 334 residues long: Malate dehydrogenase, cytoplasmic (334 aa).

An N-acetylserine modification is found at Ser-2. NAD(+)-binding positions include 11 to 17 and Asp-42; that span reads GAAGQIA. Positions 92 and 98 each coordinate substrate. Residue Asn-105 coordinates NAD(+). Residue Lys-110 is modified to N6-succinyllysine. Gln-112 is a binding site for NAD(+). N6-acetyllysine is present on residues Lys-118 and Lys-121. 129-131 lines the NAD(+) pocket; sequence VGN. Asn-131 and Arg-162 together coordinate substrate. Catalysis depends on His-187, which acts as the Proton acceptor. Lys-214 is modified (N6-succinyllysine). Ser-217 carries the post-translational modification Phosphoserine. Arg-230 carries the omega-N-methylarginine modification. Phosphoserine is present on Ser-241. Position 298 is an N6-acetyllysine; alternate (Lys-298). The residue at position 298 (Lys-298) is an N6-succinyllysine; alternate. At Ser-309 the chain carries Phosphoserine. Lys-318 carries the N6-succinyllysine modification. Residues Ser-332 and Ser-333 each carry the phosphoserine modification.

Belongs to the LDH/MDH superfamily. MDH type 2 family. In terms of assembly, homodimer. In terms of processing, ISGylated. Acetylation at Lys-118 dramatically enhances enzymatic activity and promotes adipogenic differentiation.

The protein localises to the cytoplasm. The protein resides in the cytosol. It catalyses the reaction (S)-malate + NAD(+) = oxaloacetate + NADH + H(+). It carries out the reaction (2R)-2-hydroxy-3-(4-hydroxyphenyl)propanoate + NAD(+) = 3-(4-hydroxyphenyl)pyruvate + NADH + H(+). The catalysed reaction is (S)-2-hydroxyglutarate + NAD(+) = 2-oxoglutarate + NADH + H(+). In terms of biological role, catalyzes the reduction of aromatic alpha-keto acids in the presence of NADH. Plays essential roles in the malate-aspartate shuttle and the tricarboxylic acid cycle, important in mitochondrial NADH supply for oxidative phosphorylation. Catalyzes the reduction of 2-oxoglutarate to 2-hydroxyglutarate, leading to elevated reactive oxygen species (ROS). The polypeptide is Malate dehydrogenase, cytoplasmic (MDH1) (Felis catus (Cat)).